We begin with the raw amino-acid sequence, 477 residues long: Glycogen synthase (477 aa).

K15 contributes to the ADP-alpha-D-glucose binding site.

It belongs to the glycosyltransferase 1 family. Bacterial/plant glycogen synthase subfamily.

It catalyses the reaction [(1-&gt;4)-alpha-D-glucosyl](n) + ADP-alpha-D-glucose = [(1-&gt;4)-alpha-D-glucosyl](n+1) + ADP + H(+). The protein operates within glycan biosynthesis; glycogen biosynthesis. Functionally, synthesizes alpha-1,4-glucan chains using ADP-glucose. This is Glycogen synthase from Citrobacter koseri (strain ATCC BAA-895 / CDC 4225-83 / SGSC4696).